We begin with the raw amino-acid sequence, 237 residues long: Ig heavy chain Mem5 (237 aa).

Ig-like domains follow at residues 1 to 119 (EVKL…LTVS) and 126 to 218 (PSVY…KKIE). A disulfide bridge links Cys-22 with Cys-98. Positions 101-105 (VDYGT) are d segment. Positions 106 to 120 (NYDYWGQGTTLTVSS) are JH2 segment. Cys-147 and Cys-202 are joined by a disulfide.

It is found in the secreted. Anti-influenza H3N2 neuraminidase antibody. In Mus musculus (Mouse), this protein is Ig heavy chain Mem5.